A 189-amino-acid chain; its full sequence is Small ribosomal subunit protein uS5 (189 aa).

The 64-residue stretch at 22–85 folds into the S5 DRBM domain; the sequence is FVDKLVAINR…EAAKRDLIFV (64 aa).

This sequence belongs to the universal ribosomal protein uS5 family. Part of the 30S ribosomal subunit. Contacts proteins S4 and S8.

Its function is as follows. With S4 and S12 plays an important role in translational accuracy. Functionally, located at the back of the 30S subunit body where it stabilizes the conformation of the head with respect to the body. This Sinorhizobium fredii (strain NBRC 101917 / NGR234) protein is Small ribosomal subunit protein uS5.